The sequence spans 312 residues: MEISVFGGGAWGRALAFAFGEKNEVKIISRRDLNEPLKKLNDALISKGSAPIEQVDLETGLKASLYVVAISVQHLREWFQNASLPKNAKVLIASKGIEVLNKAFVSEIAKDFIEPNHLCFLAGPSFAAEIIQGLPCALVIHSNNQALALEFANKTPSFIRAYAQQDIIGGEIAGAYKNVIAIAGGVCDGLKLGNSAKASLLSRGLVEMQRFGAFFGGKTETFLGLSGAGDLFLTANSILSRNYRVGLGLAQNKPLEVVLEELGEVAEGVKTTNAIVEIAKKYGIYTPIASELALLLKGKSVLESMNDLIRRA.

The NADPH site is built by W11, R30, R31, and K95. Positions 95, 123, and 125 each coordinate sn-glycerol 3-phosphate. A127 is an NADPH binding site. Sn-glycerol 3-phosphate-binding residues include K177, D230, S240, R241, and N242. Catalysis depends on K177, which acts as the Proton acceptor. R241 is a binding site for NADPH. The NADPH site is built by V265 and E267.

It belongs to the NAD-dependent glycerol-3-phosphate dehydrogenase family.

The protein resides in the cytoplasm. It catalyses the reaction sn-glycerol 3-phosphate + NAD(+) = dihydroxyacetone phosphate + NADH + H(+). The catalysed reaction is sn-glycerol 3-phosphate + NADP(+) = dihydroxyacetone phosphate + NADPH + H(+). It functions in the pathway membrane lipid metabolism; glycerophospholipid metabolism. In terms of biological role, catalyzes the reduction of the glycolytic intermediate dihydroxyacetone phosphate (DHAP) to sn-glycerol 3-phosphate (G3P), the key precursor for phospholipid synthesis. The chain is Glycerol-3-phosphate dehydrogenase [NAD(P)+] from Helicobacter acinonychis (strain Sheeba).